Reading from the N-terminus, the 155-residue chain is Endoribonuclease YbeY (155 aa).

Residues 64–84 (SFPMDEMRAPGDDEDPPSGLL) form a disordered region. Histidine 115, histidine 119, and histidine 125 together coordinate Zn(2+).

This sequence belongs to the endoribonuclease YbeY family. Requires Zn(2+) as cofactor.

The protein resides in the cytoplasm. In terms of biological role, single strand-specific metallo-endoribonuclease involved in late-stage 70S ribosome quality control and in maturation of the 3' terminus of the 16S rRNA. This is Endoribonuclease YbeY from Cutibacterium acnes (strain DSM 16379 / KPA171202) (Propionibacterium acnes).